The primary structure comprises 115 residues: uncharacterized protein (115 aa).

This is an uncharacterized protein from Homo sapiens (Human).